We begin with the raw amino-acid sequence, 435 residues long: Adenylosuccinate synthetase (435 aa).

GTP-binding positions include Gly11–Lys17 and Gly39–Thr41. Asp12 (proton acceptor) is an active-site residue. Asp12 and Gly39 together coordinate Mg(2+). Residues Asp12–Lys15, Asn37–His40, Thr128, Arg142, Gln223, Thr238, and Arg302 contribute to the IMP site. Residue His40 is the Proton donor of the active site. Ser298–Arg304 contacts substrate. Residues Arg304, Lys330–Asp332, and Ser412–Gly414 each bind GTP.

This sequence belongs to the adenylosuccinate synthetase family. As to quaternary structure, homodimer. The cofactor is Mg(2+).

It localises to the cytoplasm. It catalyses the reaction IMP + L-aspartate + GTP = N(6)-(1,2-dicarboxyethyl)-AMP + GDP + phosphate + 2 H(+). It functions in the pathway purine metabolism; AMP biosynthesis via de novo pathway; AMP from IMP: step 1/2. In terms of biological role, plays an important role in the de novo pathway of purine nucleotide biosynthesis. Catalyzes the first committed step in the biosynthesis of AMP from IMP. The chain is Adenylosuccinate synthetase from Coxiella burnetii (strain CbuK_Q154) (Coxiella burnetii (strain Q154)).